A 354-amino-acid polypeptide reads, in one-letter code: DNA polymerase IV 2 (354 aa).

The UmuC domain maps to 4–184; that stretch reads IIHIDMDAFY…LPVKKFHGVG (181 aa). Positions 8 and 102 each coordinate Mg(2+). Residue E103 is part of the active site.

Belongs to the DNA polymerase type-Y family. Monomer. Mg(2+) is required as a cofactor.

Its subcellular location is the cytoplasm. The enzyme catalyses DNA(n) + a 2'-deoxyribonucleoside 5'-triphosphate = DNA(n+1) + diphosphate. Functionally, poorly processive, error-prone DNA polymerase involved in untargeted mutagenesis. Copies undamaged DNA at stalled replication forks, which arise in vivo from mismatched or misaligned primer ends. These misaligned primers can be extended by PolIV. Exhibits no 3'-5' exonuclease (proofreading) activity. May be involved in translesional synthesis, in conjunction with the beta clamp from PolIII. This is DNA polymerase IV 2 (dinB2) from Rhizobium meliloti (strain 1021) (Ensifer meliloti).